Here is a 61-residue protein sequence, read N- to C-terminus: Ferredoxin-3 (61 aa).

4Fe-4S ferredoxin-type domains lie at 2–31 and 32–61; these read YKIT…LQDG and KAVA…VEEN. Residues Cys11 and Cys17 each coordinate [3Fe-4S] cluster. The [4Fe-4S] cluster site is built by Cys21, Cys41, Cys44, and Cys47. Cys51 is a [3Fe-4S] cluster binding site.

The cofactor is [3Fe-4S] cluster. [4Fe-4S] cluster is required as a cofactor.

Its function is as follows. Ferredoxins are iron-sulfur proteins that transfer electrons in a wide variety of metabolic reactions. The sequence is that of Ferredoxin-3 from Desulfocurvibacter africanus (Desulfovibrio africanus).